Consider the following 651-residue polypeptide: Acetyl-coenzyme A synthetase (651 aa).

Residues 191-194 (RGGK), threonine 311, and asparagine 335 contribute to the CoA site. ATP is bound by residues 387 to 389 (GEP), 411 to 416 (DTWWQT), aspartate 500, and arginine 515. Serine 523 provides a ligand contact to CoA. Arginine 526 serves as a coordination point for ATP. Positions 537, 539, and 542 each coordinate Mg(2+). A CoA-binding site is contributed by arginine 584. Lysine 609 carries the post-translational modification N6-acetyllysine.

Belongs to the ATP-dependent AMP-binding enzyme family. It depends on Mg(2+) as a cofactor. Acetylated. Deacetylation by the SIR2-homolog deacetylase activates the enzyme.

It catalyses the reaction acetate + ATP + CoA = acetyl-CoA + AMP + diphosphate. Functionally, catalyzes the conversion of acetate into acetyl-CoA (AcCoA), an essential intermediate at the junction of anabolic and catabolic pathways. AcsA undergoes a two-step reaction. In the first half reaction, AcsA combines acetate with ATP to form acetyl-adenylate (AcAMP) intermediate. In the second half reaction, it can then transfer the acetyl group from AcAMP to the sulfhydryl group of CoA, forming the product AcCoA. This is Acetyl-coenzyme A synthetase from Pseudomonas syringae pv. tomato (strain ATCC BAA-871 / DC3000).